We begin with the raw amino-acid sequence, 84 residues long: uncharacterized protein (84 aa).

Composition is skewed to basic residues over residues 1 to 15 and 67 to 84; these read MPPH…HGHH and HHGH…GHFF. Disordered stretches follow at residues 1–22 and 64–84; these read MPPH…TYTT and TSHH…GHFF.

This is an uncharacterized protein from Dictyostelium discoideum (Social amoeba).